A 379-amino-acid polypeptide reads, in one-letter code: Probable pectin lyase B (379 aa).

An N-terminal signal peptide occupies residues 1 to 20; the sequence is MHYKLLFAAAAASLASAVSA. 2 disulfides stabilise this stretch: cysteine 83/cysteine 102 and cysteine 92/cysteine 226. 2 N-linked (GlcNAc...) asparagine glycosylation sites follow: asparagine 129 and asparagine 252. Residue arginine 256 is part of the active site. A disulfide bridge links cysteine 323 with cysteine 331.

Belongs to the polysaccharide lyase 1 family.

It localises to the secreted. It carries out the reaction Eliminative cleavage of (1-&gt;4)-alpha-D-galacturonan methyl ester to give oligosaccharides with 4-deoxy-6-O-methyl-alpha-D-galact-4-enuronosyl groups at their non-reducing ends.. Its function is as follows. Pectinolytic enzymes consist of four classes of enzymes: pectin lyase, polygalacturonase, pectin methylesterase and rhamnogalacturonase. Among pectinolytic enzymes, pectin lyase is the most important in depolymerization of pectin, since it cleaves internal glycosidic bonds of highly methylated pectins. The polypeptide is Probable pectin lyase B (pelB) (Aspergillus niger (strain ATCC MYA-4892 / CBS 513.88 / FGSC A1513)).